We begin with the raw amino-acid sequence, 507 residues long: Cobyric acid synthase (507 aa).

In terms of domain architecture, GATase cobBQ-type spans 273 to 468; that stretch reads RPVIAVIAYP…LHGMFEDPAV (196 aa). The active-site Nucleophile is the Cys-354. His-460 is an active-site residue.

Belongs to the CobB/CobQ family. CobQ subfamily.

It participates in cofactor biosynthesis; adenosylcobalamin biosynthesis. Its function is as follows. Catalyzes amidations at positions B, D, E, and G on adenosylcobyrinic A,C-diamide. NH(2) groups are provided by glutamine, and one molecule of ATP is hydrogenolyzed for each amidation. The sequence is that of Cobyric acid synthase from Polaromonas sp. (strain JS666 / ATCC BAA-500).